A 91-amino-acid polypeptide reads, in one-letter code: Sec-independent protein translocase protein TatAt (91 aa).

A helical transmembrane segment spans residues 9–29; that stretch reads FPGLPGGPELLVVLLIVVLLF. Positions 48 to 91 are disordered; the sequence is FQRGREEIEDELQDMTGDDDEDDATSESSADSVSTDSVSTESSN. Over residues 54-72 the composition is skewed to acidic residues; sequence EIEDELQDMTGDDDEDDAT. Low complexity predominate over residues 73–91; that stretch reads SESSADSVSTDSVSTESSN.

The protein belongs to the TatA/E family. As to quaternary structure, forms a complex with TatC. Cytoplasmic and membrane-bound TatA form high-molecular-weight complexes.

Its subcellular location is the cell membrane. It is found in the cytoplasm. Functionally, part of the twin-arginine translocation (Tat) system that transports large folded proteins containing a characteristic twin-arginine motif in their signal peptide across membranes. TatA could form the protein-conducting channel of the Tat system. In Haloferax volcanii (strain ATCC 29605 / DSM 3757 / JCM 8879 / NBRC 14742 / NCIMB 2012 / VKM B-1768 / DS2) (Halobacterium volcanii), this protein is Sec-independent protein translocase protein TatAt.